A 115-amino-acid polypeptide reads, in one-letter code: Ribonuclease P protein component (115 aa).

The protein belongs to the RnpA family. In terms of assembly, consists of a catalytic RNA component (M1 or rnpB) and a protein subunit.

It catalyses the reaction Endonucleolytic cleavage of RNA, removing 5'-extranucleotides from tRNA precursor.. RNaseP catalyzes the removal of the 5'-leader sequence from pre-tRNA to produce the mature 5'-terminus. It can also cleave other RNA substrates such as 4.5S RNA. The protein component plays an auxiliary but essential role in vivo by binding to the 5'-leader sequence and broadening the substrate specificity of the ribozyme. This Bacillus cereus (strain Q1) protein is Ribonuclease P protein component.